A 200-amino-acid chain; its full sequence is Probable nicotinate-nucleotide adenylyltransferase (200 aa).

Belongs to the NadD family.

The catalysed reaction is nicotinate beta-D-ribonucleotide + ATP + H(+) = deamido-NAD(+) + diphosphate. It participates in cofactor biosynthesis; NAD(+) biosynthesis; deamido-NAD(+) from nicotinate D-ribonucleotide: step 1/1. Catalyzes the reversible adenylation of nicotinate mononucleotide (NaMN) to nicotinic acid adenine dinucleotide (NaAD). The sequence is that of Probable nicotinate-nucleotide adenylyltransferase from Clostridium botulinum (strain Alaska E43 / Type E3).